Here is a 180-residue protein sequence, read N- to C-terminus: Large ribosomal subunit protein uL5 (180 aa).

Belongs to the universal ribosomal protein uL5 family. Part of the 50S ribosomal subunit; part of the 5S rRNA/L5/L18/L25 subcomplex. Contacts the 5S rRNA and the P site tRNA. Forms a bridge to the 30S subunit in the 70S ribosome.

In terms of biological role, this is one of the proteins that bind and probably mediate the attachment of the 5S RNA into the large ribosomal subunit, where it forms part of the central protuberance. In the 70S ribosome it contacts protein S13 of the 30S subunit (bridge B1b), connecting the 2 subunits; this bridge is implicated in subunit movement. Contacts the P site tRNA; the 5S rRNA and some of its associated proteins might help stabilize positioning of ribosome-bound tRNAs. The protein is Large ribosomal subunit protein uL5 of Chlamydia trachomatis serovar L2 (strain ATCC VR-902B / DSM 19102 / 434/Bu).